Here is a 460-residue protein sequence, read N- to C-terminus: Argininosuccinate lyase (460 aa).

This sequence belongs to the lyase 1 family. Argininosuccinate lyase subfamily.

It localises to the cytoplasm. The catalysed reaction is 2-(N(omega)-L-arginino)succinate = fumarate + L-arginine. Its pathway is amino-acid biosynthesis; L-arginine biosynthesis; L-arginine from L-ornithine and carbamoyl phosphate: step 3/3. This is Argininosuccinate lyase from Edwardsiella ictaluri (strain 93-146).